The chain runs to 127 residues: Phosphoribosyl-ATP pyrophosphatase (127 aa).

It belongs to the PRA-PH family.

It localises to the cytoplasm. The catalysed reaction is 1-(5-phospho-beta-D-ribosyl)-ATP + H2O = 1-(5-phospho-beta-D-ribosyl)-5'-AMP + diphosphate + H(+). It functions in the pathway amino-acid biosynthesis; L-histidine biosynthesis; L-histidine from 5-phospho-alpha-D-ribose 1-diphosphate: step 2/9. The polypeptide is Phosphoribosyl-ATP pyrophosphatase (Polaromonas sp. (strain JS666 / ATCC BAA-500)).